We begin with the raw amino-acid sequence, 438 residues long: Enolase (438 aa).

Substrate contacts are provided by H159 and E168. The active-site Proton donor is the E211. D246, E297, and D322 together coordinate Mg(2+). 2 residues coordinate substrate: E297 and D322. K347 (proton acceptor) is an active-site residue. Substrate is bound by residues 374 to 377 (SHRS) and K398.

It belongs to the enolase family. Homodimer. The cofactor is Mg(2+).

Its subcellular location is the cytoplasm. It carries out the reaction (2R)-2-phosphoglycerate = phosphoenolpyruvate + H2O. It participates in carbohydrate degradation; glycolysis; pyruvate from D-glyceraldehyde 3-phosphate: step 4/5. The polypeptide is Enolase (enoA) (Penicillium chrysogenum (Penicillium notatum)).